The chain runs to 156 residues: ATP synthase subunit b (156 aa).

Residues 4 to 26 traverse the membrane as a helical segment; that stretch reads GATFWGPMISFALFVWFTMKFVW.

The protein belongs to the ATPase B chain family. As to quaternary structure, F-type ATPases have 2 components, F(1) - the catalytic core - and F(0) - the membrane proton channel. F(1) has five subunits: alpha(3), beta(3), gamma(1), delta(1), epsilon(1). F(0) has three main subunits: a(1), b(2) and c(10-14). The alpha and beta chains form an alternating ring which encloses part of the gamma chain. F(1) is attached to F(0) by a central stalk formed by the gamma and epsilon chains, while a peripheral stalk is formed by the delta and b chains.

The protein localises to the cell inner membrane. F(1)F(0) ATP synthase produces ATP from ADP in the presence of a proton or sodium gradient. F-type ATPases consist of two structural domains, F(1) containing the extramembraneous catalytic core and F(0) containing the membrane proton channel, linked together by a central stalk and a peripheral stalk. During catalysis, ATP synthesis in the catalytic domain of F(1) is coupled via a rotary mechanism of the central stalk subunits to proton translocation. Functionally, component of the F(0) channel, it forms part of the peripheral stalk, linking F(1) to F(0). In Halorhodospira halophila (strain DSM 244 / SL1) (Ectothiorhodospira halophila (strain DSM 244 / SL1)), this protein is ATP synthase subunit b.